The following is a 348-amino-acid chain: Histidinol-phosphate aminotransferase (348 aa).

Lys-211 bears the N6-(pyridoxal phosphate)lysine mark.

Belongs to the class-II pyridoxal-phosphate-dependent aminotransferase family. Histidinol-phosphate aminotransferase subfamily. As to quaternary structure, homodimer. Pyridoxal 5'-phosphate is required as a cofactor.

It catalyses the reaction L-histidinol phosphate + 2-oxoglutarate = 3-(imidazol-4-yl)-2-oxopropyl phosphate + L-glutamate. It participates in amino-acid biosynthesis; L-histidine biosynthesis; L-histidine from 5-phospho-alpha-D-ribose 1-diphosphate: step 7/9. The polypeptide is Histidinol-phosphate aminotransferase (Pseudomonas entomophila (strain L48)).